The sequence spans 199 residues: Protein-methionine-sulfoxide reductase heme-binding subunit MsrQ (199 aa).

A run of 5 helical transmembrane segments spans residues 13 to 33 (VLLH…VDQG), 79 to 99 (LLGL…ALLE), 120 to 140 (LGVI…QIMM), 147 to 167 (WQKL…HYLW), and 169 to 189 (VKTL…LLLF).

Belongs to the MsrQ family. As to quaternary structure, heterodimer of a catalytic subunit (MsrP) and a heme-binding subunit (MsrQ). The cofactor is FMN. Heme b serves as cofactor.

Its subcellular location is the cell inner membrane. Its function is as follows. Part of the MsrPQ system that repairs oxidized periplasmic proteins containing methionine sulfoxide residues (Met-O), using respiratory chain electrons. Thus protects these proteins from oxidative-stress damage caused by reactive species of oxygen and chlorine generated by the host defense mechanisms. MsrPQ is essential for the maintenance of envelope integrity under bleach stress, rescuing a wide series of structurally unrelated periplasmic proteins from methionine oxidation. MsrQ provides electrons for reduction to the reductase catalytic subunit MsrP, using the quinone pool of the respiratory chain. The protein is Protein-methionine-sulfoxide reductase heme-binding subunit MsrQ of Pectobacterium carotovorum subsp. carotovorum (strain PC1).